The chain runs to 636 residues: 1-deoxy-D-xylulose-5-phosphate synthase (636 aa).

Thiamine diphosphate contacts are provided by residues His-72 and 113-115 (GHA). Asp-144 provides a ligand contact to Mg(2+). Residues 145–146 (GA), Asn-174, Tyr-287, and Glu-370 each bind thiamine diphosphate. Asn-174 contacts Mg(2+).

The protein belongs to the transketolase family. DXPS subfamily. In terms of assembly, homodimer. It depends on Mg(2+) as a cofactor. The cofactor is thiamine diphosphate.

It carries out the reaction D-glyceraldehyde 3-phosphate + pyruvate + H(+) = 1-deoxy-D-xylulose 5-phosphate + CO2. It functions in the pathway metabolic intermediate biosynthesis; 1-deoxy-D-xylulose 5-phosphate biosynthesis; 1-deoxy-D-xylulose 5-phosphate from D-glyceraldehyde 3-phosphate and pyruvate: step 1/1. In terms of biological role, catalyzes the acyloin condensation reaction between C atoms 2 and 3 of pyruvate and glyceraldehyde 3-phosphate to yield 1-deoxy-D-xylulose-5-phosphate (DXP). The polypeptide is 1-deoxy-D-xylulose-5-phosphate synthase (Rippkaea orientalis (strain PCC 8801 / RF-1) (Cyanothece sp. (strain PCC 8801))).